The primary structure comprises 24 residues: Hyaluronidase (24 aa).

Expressed by the venom gland.

The protein resides in the secreted. It catalyses the reaction Random hydrolysis of (1-&gt;4)-linkages between N-acetyl-beta-D-glucosamine and D-glucuronate residues in hyaluronate.. Functionally, possesses high activity against hyaluronan in vitro. The sequence is that of Hyaluronidase from Tityus stigmurus (Brazilian scorpion).